A 236-amino-acid polypeptide reads, in one-letter code: Phosphoribosylformylglycinamidine synthase subunit PurQ (236 aa).

Residues R2–S234 form the Glutamine amidotransferase type-1 domain. Residue C86 is the Nucleophile of the active site. Active-site residues include H203 and E205.

In terms of assembly, part of the FGAM synthase complex composed of 1 PurL, 1 PurQ and 2 PurS subunits.

It localises to the cytoplasm. The enzyme catalyses N(2)-formyl-N(1)-(5-phospho-beta-D-ribosyl)glycinamide + L-glutamine + ATP + H2O = 2-formamido-N(1)-(5-O-phospho-beta-D-ribosyl)acetamidine + L-glutamate + ADP + phosphate + H(+). It carries out the reaction L-glutamine + H2O = L-glutamate + NH4(+). Its pathway is purine metabolism; IMP biosynthesis via de novo pathway; 5-amino-1-(5-phospho-D-ribosyl)imidazole from N(2)-formyl-N(1)-(5-phospho-D-ribosyl)glycinamide: step 1/2. Functionally, part of the phosphoribosylformylglycinamidine synthase complex involved in the purines biosynthetic pathway. Catalyzes the ATP-dependent conversion of formylglycinamide ribonucleotide (FGAR) and glutamine to yield formylglycinamidine ribonucleotide (FGAM) and glutamate. The FGAM synthase complex is composed of three subunits. PurQ produces an ammonia molecule by converting glutamine to glutamate. PurL transfers the ammonia molecule to FGAR to form FGAM in an ATP-dependent manner. PurS interacts with PurQ and PurL and is thought to assist in the transfer of the ammonia molecule from PurQ to PurL. In Thermomicrobium roseum (strain ATCC 27502 / DSM 5159 / P-2), this protein is Phosphoribosylformylglycinamidine synthase subunit PurQ.